The primary structure comprises 209 residues: Pyridoxal 5'-phosphate synthase subunit PdxT (209 aa).

58 to 60 (GES) contacts L-glutamine. Cys90 functions as the Nucleophile in the catalytic mechanism. Residues Arg119 and 148 to 149 (IR) contribute to the L-glutamine site. Active-site charge relay system residues include His185 and Glu187.

This sequence belongs to the glutaminase PdxT/SNO family. In terms of assembly, in the presence of PdxS, forms a dodecamer of heterodimers. Only shows activity in the heterodimer.

The catalysed reaction is aldehydo-D-ribose 5-phosphate + D-glyceraldehyde 3-phosphate + L-glutamine = pyridoxal 5'-phosphate + L-glutamate + phosphate + 3 H2O + H(+). It catalyses the reaction L-glutamine + H2O = L-glutamate + NH4(+). Its pathway is cofactor biosynthesis; pyridoxal 5'-phosphate biosynthesis. Functionally, catalyzes the hydrolysis of glutamine to glutamate and ammonia as part of the biosynthesis of pyridoxal 5'-phosphate. The resulting ammonia molecule is channeled to the active site of PdxS. The protein is Pyridoxal 5'-phosphate synthase subunit PdxT of Clavibacter michiganensis subsp. michiganensis (strain NCPPB 382).